A 144-amino-acid chain; its full sequence is uncharacterized protein (144 aa).

A coiled-coil region spans residues 48–119 (ELNKLKAKAD…KETEEPKMEL (72 aa)).

This is an uncharacterized protein from Archaeoglobus fulgidus (strain ATCC 49558 / DSM 4304 / JCM 9628 / NBRC 100126 / VC-16).